A 321-amino-acid polypeptide reads, in one-letter code: Lipoyl synthase (321 aa).

[4Fe-4S] cluster contacts are provided by Cys68, Cys73, Cys79, Cys94, Cys98, Cys101, and Ser308. The 218-residue stretch at 80–297 (FNHGTATFMI…KAEAMAMGFT (218 aa)) folds into the Radical SAM core domain.

The protein belongs to the radical SAM superfamily. Lipoyl synthase family. [4Fe-4S] cluster serves as cofactor.

It is found in the cytoplasm. It catalyses the reaction [[Fe-S] cluster scaffold protein carrying a second [4Fe-4S](2+) cluster] + N(6)-octanoyl-L-lysyl-[protein] + 2 oxidized [2Fe-2S]-[ferredoxin] + 2 S-adenosyl-L-methionine + 4 H(+) = [[Fe-S] cluster scaffold protein] + N(6)-[(R)-dihydrolipoyl]-L-lysyl-[protein] + 4 Fe(3+) + 2 hydrogen sulfide + 2 5'-deoxyadenosine + 2 L-methionine + 2 reduced [2Fe-2S]-[ferredoxin]. The protein operates within protein modification; protein lipoylation via endogenous pathway; protein N(6)-(lipoyl)lysine from octanoyl-[acyl-carrier-protein]: step 2/2. Its function is as follows. Catalyzes the radical-mediated insertion of two sulfur atoms into the C-6 and C-8 positions of the octanoyl moiety bound to the lipoyl domains of lipoate-dependent enzymes, thereby converting the octanoylated domains into lipoylated derivatives. This Klebsiella pneumoniae (strain 342) protein is Lipoyl synthase.